Consider the following 119-residue polypeptide: Methylglyoxal synthase (119 aa).

The MGS-like domain occupies 1–119; sequence MKIALIAHDK…ESAKLIMADI (119 aa). Residues His-8, Lys-12, 34 to 37, and 54 to 55 each bind substrate; these read TGTT and SG. The active-site Proton donor/acceptor is Asp-60. His-87 serves as a coordination point for substrate.

It belongs to the methylglyoxal synthase family.

It catalyses the reaction dihydroxyacetone phosphate = methylglyoxal + phosphate. In terms of biological role, catalyzes the formation of methylglyoxal from dihydroxyacetone phosphate. The sequence is that of Methylglyoxal synthase from Clostridium perfringens (strain ATCC 13124 / DSM 756 / JCM 1290 / NCIMB 6125 / NCTC 8237 / Type A).